Reading from the N-terminus, the 438-residue chain is MAQFFKPKKKASVNTKHQSVDVVRLDHNGAGIAFVDKKPVFIEGALPGEKAIIQFIEQKKQFSRAKLIKLAQKSEKRQTPICQHYHECGGCNLQHLQHEEQIVAKNEKLQELMKKQGVSQGEMVQPIMGEELSYRRRARISLMLNKQTNQLDFGFRKKQSKAIVNVRHCPVLVQELDQHLESLFTLLNQLKGKKHLGHVELVQADNGSVLLIRHVADFNEKDQQALVNYCEERNLILYLMPEADVLNHVRGEEPFYLIDGTKIYFTPKDFIQVNRNVNEQMVEQALSWLDLNENDSVLDLFCGLGNFSLPLAKKVKTVVGIEGVDEMVQRAKLNAERNQLSNVSFYQANLEEEVSEQVWASTKFTKILLDPARAGAAGVMETVAKLKPQTVVYVSCNPATLARDSQLLIQHGFKLTRLGMLDMFPHTGHLESMALFER.

The TRAM domain maps to 10 to 69; the sequence is KASVNTKHQSVDVVRLDHNGAGIAFVDKKPVFIEGALPGEKAIIQFIEQKKQFSRAKLIK. [4Fe-4S] cluster contacts are provided by Cys-82, Cys-88, Cys-91, and Cys-169. The S-adenosyl-L-methionine site is built by Gln-272, Phe-301, Asn-306, Glu-322, Asn-349, and Asp-370. Residue Cys-396 is the Nucleophile of the active site.

Belongs to the class I-like SAM-binding methyltransferase superfamily. RNA M5U methyltransferase family. RlmD subfamily.

The enzyme catalyses uridine(1939) in 23S rRNA + S-adenosyl-L-methionine = 5-methyluridine(1939) in 23S rRNA + S-adenosyl-L-homocysteine + H(+). In terms of biological role, catalyzes the formation of 5-methyl-uridine at position 1939 (m5U1939) in 23S rRNA. In Aliivibrio fischeri (strain ATCC 700601 / ES114) (Vibrio fischeri), this protein is 23S rRNA (uracil(1939)-C(5))-methyltransferase RlmD.